A 229-amino-acid polypeptide reads, in one-letter code: MGQKINPIGLRIGVIKDWQSNWYADKNYTELVHEDIKIREYIENKLFNADVSAIQIDRAANRIKVTLHTAKPGMVIGKGGSGVEKLRSDIENLTGKKVHINVMEVKTPELDAHLAAKSIAIALERRVAFRRAMKQAVGRAMRQGAKGIKVMCSGRLGGAEMSRTEWYTEGNVPLQTLRADIDYGMVEANTAYGQIGVKCWINKGEVLPEVDENEETKEENKEKSEEKSE.

The 69-residue stretch at 38–106 (IREYIENKLF…KVHINVMEVK (69 aa)) folds into the KH type-2 domain. The segment covering 208–217 (PEVDENEETK) has biased composition (acidic residues). The disordered stretch occupies residues 208–229 (PEVDENEETKEENKEKSEEKSE). Basic and acidic residues predominate over residues 218–229 (EENKEKSEEKSE).

The protein belongs to the universal ribosomal protein uS3 family. In terms of assembly, part of the 30S ribosomal subunit. Forms a tight complex with proteins S10 and S14.

In terms of biological role, binds the lower part of the 30S subunit head. Binds mRNA in the 70S ribosome, positioning it for translation. The polypeptide is Small ribosomal subunit protein uS3 (Natranaerobius thermophilus (strain ATCC BAA-1301 / DSM 18059 / JW/NM-WN-LF)).